Here is a 189-residue protein sequence, read N- to C-terminus: MPFIRRPKRAILIPPLHLTLKDDDKVLVVETVGTLIISGMTPSNLTEKLGLAMKLASAILGGDSHPAFNPLVEIFSGAMEFGASVEKLDFMTRENKVITTYKVARGKAVALSNFPMEKRVGEKSYTTQIRNGSITYTGSFLFSAEHVGLKDNRSLFAAGEGLRESPDMAQAREAFAGSLPKGKNESSRK.

The protein belongs to the novirhabdovirus matrix protein family. In terms of assembly, homomultimer. Interacts with nucleoprotein and with the cytoplasmic domain of glycoprotein.

Its subcellular location is the virion membrane. The protein resides in the host endomembrane system. Functionally, plays a major role in assembly and budding of virion. Completely covers the ribonucleoprotein coil and keep it in condensed bullet-shaped form. Inhibits viral transcription and stimulates replication. The polypeptide is Matrix protein (M) (Gobiosoma bosc (Naked goby)).